Here is a 192-residue protein sequence, read N- to C-terminus: dTTP/UTP pyrophosphatase (192 aa).

The active-site Proton acceptor is Asp-71.

This sequence belongs to the Maf family. YhdE subfamily. It depends on a divalent metal cation as a cofactor.

It is found in the cytoplasm. It catalyses the reaction dTTP + H2O = dTMP + diphosphate + H(+). The enzyme catalyses UTP + H2O = UMP + diphosphate + H(+). In terms of biological role, nucleoside triphosphate pyrophosphatase that hydrolyzes dTTP and UTP. May have a dual role in cell division arrest and in preventing the incorporation of modified nucleotides into cellular nucleic acids. The polypeptide is dTTP/UTP pyrophosphatase (Pseudoalteromonas atlantica (strain T6c / ATCC BAA-1087)).